Consider the following 610-residue polypeptide: Pentatricopeptide repeat-containing protein At3g15590, mitochondrial (610 aa).

Residues 1-71 (MYSLSRILQR…FSRFFGIHKL (71 aa)) constitute a mitochondrion transit peptide. The segment at 88–142 (EELSESEEAVPVSGDVPEGVVDDDSLFEPELGSDNDDLEIEEKHSKDGGKPTKKR) is disordered. A compositionally biased stretch (acidic residues) spans 107–127 (VVDDDSLFEPELGSDNDDLEI). Positions 128 to 137 (EEKHSKDGGK) are enriched in basic and acidic residues. PPR repeat units lie at residues 241–275 (GEVV…KFPT), 276–309 (SVFA…NIKP), 310–344 (SRAT…GIEL), 345–379 (DPEL…GLQQ), 380–410 (TPWV…VDQN), 412–442 (RYDN…LVEK), 447–481 (PMMP…GIAI), 482–517 (GPST…KMRP), and 518–552 (MFTT…SYAA).

It belongs to the PPR family. P subfamily.

Its subcellular location is the mitochondrion. This Arabidopsis thaliana (Mouse-ear cress) protein is Pentatricopeptide repeat-containing protein At3g15590, mitochondrial.